The chain runs to 185 residues: Ribosome-recycling factor (185 aa).

This sequence belongs to the RRF family.

The protein localises to the cytoplasm. Functionally, responsible for the release of ribosomes from messenger RNA at the termination of protein biosynthesis. May increase the efficiency of translation by recycling ribosomes from one round of translation to another. This is Ribosome-recycling factor from Mannheimia succiniciproducens (strain KCTC 0769BP / MBEL55E).